The following is a 131-amino-acid chain: Runt-related transcription factor 2 (131 aa).

In terms of domain architecture, Runt spans 1–10; it reads MRVGVPPQIP. Positions 1 to 75 are disordered; that stretch reads MRVGVPPQIP…SSTRGTGLPV (75 aa). R11 is modified (asymmetric dimethylarginine). 2 stretches are compositionally biased toward polar residues: residues 13–36 and 43–70; these read SLNS…RQAQ and YDQS…STRG.

As to quaternary structure, heterodimer of an alpha and a beta subunit. The alpha subunit binds DNA as a monomer and through the Runt domain. DNA-binding is increased by heterodimerization. Interacts with XRCC6 (Ku70) and XRCC5 (Ku80). Interacts with CCNB1, KAT6A and KAT6B. Interacts with HIVEP3. Interacts with IFI204. Interaction with SATB2; the interaction results in enhanced DNA binding and transactivation by these transcription factors. Binds to HIPK3. Interacts with FOXO1 (via a C-terminal region); the interaction inhibits RUNX2 transcriptional activity towards BGLAP. This interaction is prevented on insulin or IGF1 stimulation as FOXO1 is exported from the nucleus. Interacts with FOXP3. Interacts with TMEM119. Interacts with OLFM2. Interacts with IPO7; the interaction inhibits RUNX2 nuclear translocation in osteoblasts. Post-translationally, phosphorylated; probably by MAP kinases (MAPK). Phosphorylation by HIPK3 is required for the SPEN/MINT and FGF2 transactivation during osteoblastic differentiation.

The protein localises to the nucleus. It is found in the cytoplasm. Its function is as follows. Transcription factor involved in osteoblastic differentiation and skeletal morphogenesis. Essential for the maturation of osteoblasts and both intramembranous and endochondral ossification. CBF binds to the core site, 5'-PYGPYGGT-3', of a number of enhancers and promoters, including murine leukemia virus, polyomavirus enhancer, T-cell receptor enhancers, osteocalcin, osteopontin, bone sialoprotein, alpha 1(I) collagen, LCK, IL-3 and GM-CSF promoters. Inhibits KAT6B-dependent transcriptional activation. In osteoblasts, supports transcription activation: synergizes with SPEN/MINT to enhance FGFR2-mediated activation of the osteocalcin FGF-responsive element (OCFRE). The protein is Runt-related transcription factor 2 (RUNX2) of Equus caballus (Horse).